The following is a 234-amino-acid chain: LexA repressor (234 aa).

The H-T-H motif DNA-binding region spans 41 to 61 (RAEIAAELGFRSPNAAEEHLK). Catalysis depends on for autocatalytic cleavage activity residues serine 152 and lysine 189.

The protein belongs to the peptidase S24 family. In terms of assembly, homodimer.

It carries out the reaction Hydrolysis of Ala-|-Gly bond in repressor LexA.. In terms of biological role, represses a number of genes involved in the response to DNA damage (SOS response), including recA and lexA. In the presence of single-stranded DNA, RecA interacts with LexA causing an autocatalytic cleavage which disrupts the DNA-binding part of LexA, leading to derepression of the SOS regulon and eventually DNA repair. The chain is LexA repressor from Polaromonas naphthalenivorans (strain CJ2).